We begin with the raw amino-acid sequence, 407 residues long: Tryptophan synthase beta chain (407 aa).

Lys98 carries the N6-(pyridoxal phosphate)lysine modification.

The protein belongs to the TrpB family. As to quaternary structure, tetramer of two alpha and two beta chains. It depends on pyridoxal 5'-phosphate as a cofactor.

It catalyses the reaction (1S,2R)-1-C-(indol-3-yl)glycerol 3-phosphate + L-serine = D-glyceraldehyde 3-phosphate + L-tryptophan + H2O. It participates in amino-acid biosynthesis; L-tryptophan biosynthesis; L-tryptophan from chorismate: step 5/5. The beta subunit is responsible for the synthesis of L-tryptophan from indole and L-serine. The chain is Tryptophan synthase beta chain from Bradyrhizobium sp. (strain ORS 278).